The following is a 149-amino-acid chain: Large ribosomal subunit protein bL9 (149 aa).

It belongs to the bacterial ribosomal protein bL9 family.

Its function is as follows. Binds to the 23S rRNA. The chain is Large ribosomal subunit protein bL9 from Klebsiella pneumoniae (strain 342).